Here is a 58-residue protein sequence, read N- to C-terminus: Birtoxin (58 aa).

The 56-residue stretch at 3–58 (VPGNYPLDKDGNTYKCFLLGGNEECLNVCKLHGVQYGYCYASKCWCEYLEDDKDSV) folds into the LCN-type CS-alpha/beta domain. 3 disulfide bridges follow: Cys18-Cys41, Cys27-Cys46, and Cys31-Cys48.

In terms of tissue distribution, expressed by the venom gland.

It is found in the secreted. Beta toxins bind voltage-independently at site-4 of sodium channels (Nav) and shift the voltage of activation toward more negative potentials thereby affecting sodium channel activation and promoting spontaneous and repetitive firing. Moderately toxic, but very high abundant. Does not target reptilian channels. Does not produce effect when administered to blowfly and cabbage looper larvae. In mice, produces convulsions, tremors, increased ventilation and, subsequently, death. The chain is Birtoxin from Parabuthus transvaalicus (Transvaal thick-tailed scorpion).